An 81-amino-acid polypeptide reads, in one-letter code: Weak neurotoxin OH-72 (81 aa).

Residues 1–16 (LTLVVVTIVCLDLGYT) form the signal peptide. Disulfide bonds link Cys19–Cys40, Cys22–Cys27, Cys33–Cys58, Cys62–Cys73, and Cys74–Cys79.

Belongs to the three-finger toxin family. Ancestral subfamily. Orphan group II sub-subfamily. As to expression, expressed by the venom gland.

Its subcellular location is the secreted. Functionally, binds with low affinity to muscular (alpha-1-beta-1-delta-epsilon/CHRNA1-CHRNB1-CHRND-CHRNE) and very low affinity to neuronal (alpha-7/CHRNA7) nicotinic acetylcholine receptor (nAChR). The chain is Weak neurotoxin OH-72 from Ophiophagus hannah (King cobra).